The chain runs to 51 residues: Large ribosomal subunit protein bL33 (51 aa).

A disordered region spans residues 1-20 (MRDKIRLNSSAGTGHFYTTD).

This sequence belongs to the bacterial ribosomal protein bL33 family.

The sequence is that of Large ribosomal subunit protein bL33 from Psychromonas ingrahamii (strain DSM 17664 / CCUG 51855 / 37).